The chain runs to 1002 residues: TOG array regulator of axonemal microtubules protein 2 (1002 aa).

Disordered regions lie at residues 54–74, 131–214, 332–351, 402–421, and 426–450; these read SSVLPSSEKPSQLSREHEDQS, KRRL…SAQE, ETRSLENEEDQKESSTKVQV, PLRGSGALSEPAGMSSPRRN, and LQRKRANRASLPSIPVSKQEPGFAR.

The protein belongs to the Crescerin family.

This Mus musculus (Mouse) protein is TOG array regulator of axonemal microtubules protein 2 (Togaram2).